A 539-amino-acid polypeptide reads, in one-letter code: Chaperonin GroEL (539 aa).

ATP contacts are provided by residues 29–32, 86–90, Gly-413, 477–479, and Asp-493; these read TLGP, DGTTT, and DAL.

Belongs to the chaperonin (HSP60) family. Forms a cylinder of 14 subunits composed of two heptameric rings stacked back-to-back. Interacts with the co-chaperonin GroES.

Its subcellular location is the cytoplasm. It catalyses the reaction ATP + H2O + a folded polypeptide = ADP + phosphate + an unfolded polypeptide.. In terms of biological role, together with its co-chaperonin GroES, plays an essential role in assisting protein folding. The GroEL-GroES system forms a nano-cage that allows encapsulation of the non-native substrate proteins and provides a physical environment optimized to promote and accelerate protein folding. The chain is Chaperonin GroEL from Clostridium perfringens (strain ATCC 13124 / DSM 756 / JCM 1290 / NCIMB 6125 / NCTC 8237 / Type A).